Reading from the N-terminus, the 364-residue chain is Chorismate synthase (364 aa).

Positions 48 and 54 each coordinate NADP(+). FMN-binding positions include 125 to 127, 238 to 239, Gly-278, 293 to 297, and Arg-319; these read RSS, NA, and KPTSS.

Belongs to the chorismate synthase family. As to quaternary structure, homotetramer. The cofactor is FMNH2.

The enzyme catalyses 5-O-(1-carboxyvinyl)-3-phosphoshikimate = chorismate + phosphate. The protein operates within metabolic intermediate biosynthesis; chorismate biosynthesis; chorismate from D-erythrose 4-phosphate and phosphoenolpyruvate: step 7/7. Functionally, catalyzes the anti-1,4-elimination of the C-3 phosphate and the C-6 proR hydrogen from 5-enolpyruvylshikimate-3-phosphate (EPSP) to yield chorismate, which is the branch point compound that serves as the starting substrate for the three terminal pathways of aromatic amino acid biosynthesis. This reaction introduces a second double bond into the aromatic ring system. The chain is Chorismate synthase from Shewanella woodyi (strain ATCC 51908 / MS32).